The sequence spans 193 residues: MKVKVIPVLEDNYMYLVIEERTREAVAVDVAVPKRLLEIVGRERVSLTTVLTTHHHWDHARGNAELARLLPGLVVLGADERICALTRRLAHGEELRFGAIHVRCLLTPGHTLGHMSYFLWEEECPDPPAVFSGTGCPVPTCPTSPCPIPLSLTHPTPQGMHCPWPAAAHAWRAQFSRCTRAWWRPWAPCPLRQ.

H54, H56, D58, H59, and H110 together coordinate Zn(2+).

Belongs to the metallo-beta-lactamase superfamily. Glyoxalase II family. It depends on Zn(2+) as a cofactor.

Its function is as follows. Hydrolase acting on ester bonds. The polypeptide is Hydroxyacylglutathione hydrolase-like protein (HAGHL) (Bos taurus (Bovine)).